We begin with the raw amino-acid sequence, 507 residues long: ATP synthase subunit alpha, chloroplastic (507 aa).

Residue 170 to 177 (GDRQTGKT) participates in ATP binding.

The protein belongs to the ATPase alpha/beta chains family. As to quaternary structure, F-type ATPases have 2 components, CF(1) - the catalytic core - and CF(0) - the membrane proton channel. CF(1) has five subunits: alpha(3), beta(3), gamma(1), delta(1), epsilon(1). CF(0) has four main subunits: a, b, b' and c.

The protein localises to the plastid. It is found in the chloroplast thylakoid membrane. The catalysed reaction is ATP + H2O + 4 H(+)(in) = ADP + phosphate + 5 H(+)(out). Produces ATP from ADP in the presence of a proton gradient across the membrane. The alpha chain is a regulatory subunit. The polypeptide is ATP synthase subunit alpha, chloroplastic (Tetradesmus obliquus (Green alga)).